A 282-amino-acid polypeptide reads, in one-letter code: Shikimate dehydrogenase (NADP(+)) (282 aa).

Shikimate-binding positions include 16–18 (SLS) and Thr-63. Lys-67 acts as the Proton acceptor in catalysis. Positions 88 and 103 each coordinate shikimate. NADP(+) contacts are provided by residues 128–132 (GAGGA) and Leu-219. Tyr-221 is a shikimate binding site. Residue Gly-243 participates in NADP(+) binding.

Belongs to the shikimate dehydrogenase family. Homodimer.

It catalyses the reaction shikimate + NADP(+) = 3-dehydroshikimate + NADPH + H(+). The protein operates within metabolic intermediate biosynthesis; chorismate biosynthesis; chorismate from D-erythrose 4-phosphate and phosphoenolpyruvate: step 4/7. Functionally, involved in the biosynthesis of the chorismate, which leads to the biosynthesis of aromatic amino acids. Catalyzes the reversible NADPH linked reduction of 3-dehydroshikimate (DHSA) to yield shikimate (SA). This is Shikimate dehydrogenase (NADP(+)) from Xylella fastidiosa (strain M12).